Consider the following 377-residue polypeptide: Chaperone protein DnaJ (377 aa).

Residues 5–70 form the J domain; sequence DYYEVLEVSR…EKRTIYDRYG (66 aa). A CR-type zinc finger spans residues 138 to 215; that stretch reads GCEKKIDITY…CQGKGYHEET (78 aa). Zn(2+) is bound by residues C151, C154, C167, C170, C189, C192, C203, and C206. 4 CXXCXGXG motif repeats span residues 151-158, 167-174, 189-196, and 203-210; these read CEECGGTG, CDYCGGQG, CPKCHGEG, and CPSCQGKG.

Belongs to the DnaJ family. In terms of assembly, homodimer. Zn(2+) is required as a cofactor.

The protein resides in the cytoplasm. Participates actively in the response to hyperosmotic and heat shock by preventing the aggregation of stress-denatured proteins and by disaggregating proteins, also in an autonomous, DnaK-independent fashion. Unfolded proteins bind initially to DnaJ; upon interaction with the DnaJ-bound protein, DnaK hydrolyzes its bound ATP, resulting in the formation of a stable complex. GrpE releases ADP from DnaK; ATP binding to DnaK triggers the release of the substrate protein, thus completing the reaction cycle. Several rounds of ATP-dependent interactions between DnaJ, DnaK and GrpE are required for fully efficient folding. Also involved, together with DnaK and GrpE, in the DNA replication of plasmids through activation of initiation proteins. The sequence is that of Chaperone protein DnaJ from Sulfurovum sp. (strain NBC37-1).